The primary structure comprises 61 residues: Large ribosomal subunit protein bL32 (61 aa).

The segment covering 1–16 has biased composition (basic residues); sequence MPTPKKKTSRSKRDMR. Residues 1–47 are disordered; that stretch reads MPTPKKKTSRSKRDMRRSHDGLTAPAIAVEKKTGELVRPHRAHKGAD. A compositionally biased stretch (basic and acidic residues) spans 29 to 38; sequence VEKKTGELVR.

This sequence belongs to the bacterial ribosomal protein bL32 family.

The polypeptide is Large ribosomal subunit protein bL32 (Bdellovibrio bacteriovorus (strain ATCC 15356 / DSM 50701 / NCIMB 9529 / HD100)).